The following is a 489-amino-acid chain: N-succinylglutamate 5-semialdehyde dehydrogenase (489 aa).

Residue 221 to 226 (GSSGTG) coordinates NAD(+). Active-site residues include Glu-244 and Cys-278.

Belongs to the aldehyde dehydrogenase family. AstD subfamily.

The enzyme catalyses N-succinyl-L-glutamate 5-semialdehyde + NAD(+) + H2O = N-succinyl-L-glutamate + NADH + 2 H(+). It functions in the pathway amino-acid degradation; L-arginine degradation via AST pathway; L-glutamate and succinate from L-arginine: step 4/5. In terms of biological role, catalyzes the NAD-dependent reduction of succinylglutamate semialdehyde into succinylglutamate. The sequence is that of N-succinylglutamate 5-semialdehyde dehydrogenase from Sorangium cellulosum (strain So ce56) (Polyangium cellulosum (strain So ce56)).